The sequence spans 437 residues: 5-hydroxytryptamine receptor 3B (437 aa).

The signal sequence occupies residues 1–21 (MILLWSCLLVAVVGILGTATP). Residues 22–235 (QPGNSSLHRL…RFNVVIRRCP (214 aa)) are Extracellular-facing. 3 N-linked (GlcNAc...) asparagine glycosylation sites follow: asparagine 25, asparagine 92, and asparagine 134. Cysteine 151 and cysteine 165 form a disulfide bridge. The chain crosses the membrane as a helical span at residues 236-255 (LAYVVSLLIPSIFLMLVDLG). Residues 256–266 (SFYLPPNCRAR) are Cytoplasmic-facing. The helical transmembrane segment at 267 to 284 (IVFKTNVLVGYTVFRVNM) threads the bilayer. Residues 285–295 (SDEVPRSAGCT) lie on the Extracellular side of the membrane. The chain crosses the membrane as a helical span at residues 296 to 324 (SLIGVFFTVCMALLVLSLSKSILLIKFLY). Residues 325–410 (EERHSEQERP…WLAILCHFDQ (86 aa)) are Cytoplasmic-facing. The HA-stretch; determines single-channel conductance in 5-HT3 receptors stretch occupies residues 377 to 409 (FWFQLQSINNSLRTRDQVYQKEVEWLAILCHFD). Residues 411-434 (LLFRIYLAVLGLYTVTLCSLWALW) traverse the membrane as a helical segment. Topologically, residues 435-437 (SRM) are extracellular.

It belongs to the ligand-gated ion channel (TC 1.A.9) family. 5-hydroxytryptamine receptor (TC 1.A.9.2) subfamily. HTR3B sub-subfamily. Forms homopentameric as well as heteropentameric serotonin-activated cation-selective channel complexes with HTR3A. The homomeric complex is not functional. Heteropentameric complexes display properties which resemble that of neuronal serotonin-activated channels in vivo. Post-translationally, N-glycosylation is required for membrane localization. Expressed in peripheral neurons, but not in neurons of the central nervous system.

The protein localises to the postsynaptic cell membrane. Its subcellular location is the cell membrane. The catalysed reaction is Na(+)(in) = Na(+)(out). It carries out the reaction K(+)(in) = K(+)(out). It catalyses the reaction Ca(2+)(in) = Ca(2+)(out). In terms of biological role, forms serotonin (5-hydroxytryptamine/5-HT3)-activated cation-selective channel complexes, which when activated cause fast, depolarizing responses in neurons. The sequence is that of 5-hydroxytryptamine receptor 3B from Rattus norvegicus (Rat).